A 348-amino-acid polypeptide reads, in one-letter code: Ferredoxin--NADP reductase (348 aa).

FAD contacts are provided by T26, E45, Q53, Y58, A98, F133, D299, and S340.

The protein belongs to the ferredoxin--NADP reductase type 2 family. As to quaternary structure, homodimer. Requires FAD as cofactor.

It carries out the reaction 2 reduced [2Fe-2S]-[ferredoxin] + NADP(+) + H(+) = 2 oxidized [2Fe-2S]-[ferredoxin] + NADPH. The chain is Ferredoxin--NADP reductase from Prosthecochloris aestuarii (strain DSM 271 / SK 413).